The sequence spans 204 residues: Dephospho-CoA kinase (204 aa).

Residues valine 3 to histidine 204 form the DPCK domain. Glycine 11 to tyrosine 16 is a binding site for ATP.

This sequence belongs to the CoaE family.

The protein resides in the cytoplasm. The enzyme catalyses 3'-dephospho-CoA + ATP = ADP + CoA + H(+). The protein operates within cofactor biosynthesis; coenzyme A biosynthesis; CoA from (R)-pantothenate: step 5/5. Catalyzes the phosphorylation of the 3'-hydroxyl group of dephosphocoenzyme A to form coenzyme A. This is Dephospho-CoA kinase from Ralstonia nicotianae (strain ATCC BAA-1114 / GMI1000) (Ralstonia solanacearum).